A 381-amino-acid chain; its full sequence is Succinate--CoA ligase [ADP-forming] subunit beta (381 aa).

The ATP-grasp domain occupies 9-236 (KTIFADAGIP…ESYEDDLERK (228 aa)). Residues lysine 45, 52–54 (GRG), glutamate 91, valine 94, and glutamate 99 contribute to the ATP site. Residues asparagine 191 and aspartate 205 each coordinate Mg(2+). Substrate-binding positions include asparagine 256 and 313 to 315 (GIT).

Belongs to the succinate/malate CoA ligase beta subunit family. As to quaternary structure, heterotetramer of two alpha and two beta subunits. Mg(2+) serves as cofactor.

The enzyme catalyses succinate + ATP + CoA = succinyl-CoA + ADP + phosphate. The catalysed reaction is GTP + succinate + CoA = succinyl-CoA + GDP + phosphate. Its pathway is carbohydrate metabolism; tricarboxylic acid cycle; succinate from succinyl-CoA (ligase route): step 1/1. Functionally, succinyl-CoA synthetase functions in the citric acid cycle (TCA), coupling the hydrolysis of succinyl-CoA to the synthesis of either ATP or GTP and thus represents the only step of substrate-level phosphorylation in the TCA. The beta subunit provides nucleotide specificity of the enzyme and binds the substrate succinate, while the binding sites for coenzyme A and phosphate are found in the alpha subunit. The protein is Succinate--CoA ligase [ADP-forming] subunit beta of Halorubrum lacusprofundi (strain ATCC 49239 / DSM 5036 / JCM 8891 / ACAM 34).